Here is a 57-residue protein sequence, read N- to C-terminus: Somatostatin-2 (57 aa).

A disordered region spans residues 1–26 (GRSHMVLNSALEGARGGPGGEEIPER).

It belongs to the somatostatin family.

The protein localises to the secreted. Somatostatin inhibits the release of somatotropin. This Piaractus mesopotamicus (Small-scaled pacu) protein is Somatostatin-2 (sst2).